A 264-amino-acid chain; its full sequence is Iodotyrosine deiodinase (264 aa).

Residues 75-79 (RRTVR) and 103-104 (SG) each bind FMN. 4 residues coordinate 3-iodo-L-tyrosine: A105, E132, Y136, and K157. Residues 212–214 (TST) and R254 contribute to the FMN site.

It belongs to the nitroreductase family. FMN is required as a cofactor.

The enzyme catalyses 2 iodide + L-tyrosine + 2 NADP(+) = 3,5-diiodo-L-tyrosine + 2 NADPH + H(+). It catalyses the reaction iodide + L-tyrosine + NADP(+) = 3-iodo-L-tyrosine + NADPH. It carries out the reaction 3-iodo-L-tyrosine + iodide + NADP(+) = 3,5-diiodo-L-tyrosine + NADPH + H(+). The catalysed reaction is L-tyrosine + chloride + NADP(+) = 3-chloro-L-tyrosine + NADPH. The enzyme catalyses bromide + L-tyrosine + NADP(+) = 3-bromo-L-tyrosine + NADPH. Functionally, catalyzes the dehalogenation of halotyrosines such as 3,5-diiodo-L-tyrosine. Likely to also catalyze the dehalogenation of other halotyrosines such as 3-bromo-L-tyrosine, 3-chloro-L-tyrosine and 3-iodo-L-tyrosine. In Nematostella vectensis (Starlet sea anemone), this protein is Iodotyrosine deiodinase.